Reading from the N-terminus, the 50-residue chain is Thrombin-like enzyme BpirSP41 (50 aa).

Residues 1–50 enclose the Peptidase S1 domain; the sequence is VVGGDECDINEHPFLAFLYSHGYFCGLTLINQEWVLTAAHCDRRFMRIYL. Residues Cys-25 and Cys-41 are joined by a disulfide bond. Catalysis depends on His-40, which acts as the Charge relay system.

This sequence belongs to the peptidase S1 family. Snake venom subfamily. As to quaternary structure, monomer. N-glycosylated. In terms of tissue distribution, expressed by the venom gland.

The protein resides in the secreted. Its activity is regulated as follows. Inhibited by serine protease inhibitors PMSF, benzamidine, leupeptin and aprotinin, as well as by copper ions (Cu2+). Not inhibited by metalloprotease inhibitors EDTA, EGTA and 1,10-phenanthroline, as well as by barium (Ba2+) and calcium ion (Ca2+). Its function is as follows. Snake venom serine protease that interferes with the hemostatic system of the prey. It almost completely degrades both Aalpha (FGA) and Bbeta (FGB) chains of fibrinogen. It presents a higher ability to degrade fibrin clots than BpirSP27. It hydrolyzes chromogenic substrates S-2238 (used for testing thrombin activity), S-2222 (factor Xa), S-2266 (glandular kallikrein and factor XIa), and S-2302 (plasma kallikrein, factor XIa and XIIa). It shows a decrease in the clotting time of human plasma in the presence of increasing doses of the enzyme. Its minimum coagulant dose (MCD) is 20 ug. It promotes platelet aggregation with a maximum of aggregation of 20%, regardless of the concentration increase or the presence of calcium. It also shows 40% inhibition of the hemolytic activity promoted by the complement pathways and possess only a minor role in the induction of edema and pain in rat. This is Thrombin-like enzyme BpirSP41 from Bothrops pirajai (Piraja's lancehead).